The chain runs to 281 residues: 2-dehydro-3-deoxyphosphooctonate aldolase (281 aa).

Belongs to the KdsA family.

It localises to the cytoplasm. It catalyses the reaction D-arabinose 5-phosphate + phosphoenolpyruvate + H2O = 3-deoxy-alpha-D-manno-2-octulosonate-8-phosphate + phosphate. It functions in the pathway carbohydrate biosynthesis; 3-deoxy-D-manno-octulosonate biosynthesis; 3-deoxy-D-manno-octulosonate from D-ribulose 5-phosphate: step 2/3. Its pathway is bacterial outer membrane biogenesis; lipopolysaccharide biosynthesis. This Pseudomonas syringae pv. syringae (strain B728a) protein is 2-dehydro-3-deoxyphosphooctonate aldolase.